Reading from the N-terminus, the 390-residue chain is GTPase Obg (390 aa).

The 159-residue stretch at 1-159 (MKFVDEATIL…RDLQLELMLL (159 aa)) folds into the Obg domain. Residues 127–146 (NTRFKSSVNRTPRQKTMGTP) are disordered. A compositionally biased stretch (polar residues) spans 129-143 (RFKSSVNRTPRQKTM). The 174-residue stretch at 160 to 333 (ADVGMLGMPN…LCWDVMHFII (174 aa)) folds into the OBG-type G domain. Residues 166–173 (GMPNAGKS), 191–195 (FTTLV), 213–216 (DIPG), 283–286 (NKID), and 314–316 (SAA) contribute to the GTP site. Positions 173 and 193 each coordinate Mg(2+). The segment covering 364–384 (MEAEAEEEWDDDWDEDDDEGV) has biased composition (acidic residues). The disordered stretch occupies residues 364–390 (MEAEAEEEWDDDWDEDDDEGVEIVYQR).

This sequence belongs to the TRAFAC class OBG-HflX-like GTPase superfamily. OBG GTPase family. As to quaternary structure, monomer. Mg(2+) serves as cofactor.

The protein resides in the cytoplasm. In terms of biological role, an essential GTPase which binds GTP, GDP and possibly (p)ppGpp with moderate affinity, with high nucleotide exchange rates and a fairly low GTP hydrolysis rate. Plays a role in control of the cell cycle, stress response, ribosome biogenesis and in those bacteria that undergo differentiation, in morphogenesis control. The sequence is that of GTPase Obg from Cronobacter sakazakii (strain ATCC BAA-894) (Enterobacter sakazakii).